A 48-amino-acid chain; its full sequence is Small polypeptide DEVIL 14 (48 aa).

The chain crosses the membrane as a helical span at residues 4 to 23; that stretch reads TVVLRCCTSVTKVRTWKRCS. The required for DVL/RTFL small polypeptide activity stretch occupies residues 17-48; it reads RTWKRCSKQIKEQRARLYIIWKCAVFLLSSHD.

Belongs to the DVL/RTFL small polypeptides family.

Its subcellular location is the cell membrane. In terms of biological role, small polypeptide acting as a regulatory molecule which coordinates cellular responses required for differentiation, growth and development, probably by restricting polar cell proliferation in lateral organs and coordinating socket cell recruitment and differentiation at trichome sites. This is Small polypeptide DEVIL 14 from Arabidopsis thaliana (Mouse-ear cress).